Consider the following 461-residue polypeptide: uncharacterized protein (461 aa).

A run of 2 helical transmembrane segments spans residues 18-38 (IITW…FLIY) and 124-144 (FIFL…ILSI). 2 PLD phosphodiesterase domains span residues 197-224 (YNYR…ADEY) and 374-401 (TPGF…DYRS).

Belongs to the phospholipase D family. Cardiolipin synthase subfamily.

The protein localises to the cell membrane. This is an uncharacterized protein from Streptococcus mutans serotype c (strain ATCC 700610 / UA159).